Here is a 392-residue protein sequence, read N- to C-terminus: S-adenosylmethionine synthase (392 aa).

An ATP-binding site is contributed by His-17. Asp-19 lines the Mg(2+) pocket. Glu-45 serves as a coordination point for K(+). L-methionine-binding residues include Glu-58 and Gln-102. The flexible loop stretch occupies residues 102 to 112; that stretch reads QSADIAQGVDA. Residues 169 to 171, 235 to 236, Asp-244, 250 to 251, Ala-267, and Lys-271 each bind ATP; these read DAK, KF, and RK. An L-methionine-binding site is contributed by Asp-244. Position 275 (Lys-275) interacts with L-methionine.

Belongs to the AdoMet synthase family. As to quaternary structure, homotetramer; dimer of dimers. The cofactor is Mg(2+). K(+) serves as cofactor.

It is found in the cytoplasm. The enzyme catalyses L-methionine + ATP + H2O = S-adenosyl-L-methionine + phosphate + diphosphate. It participates in amino-acid biosynthesis; S-adenosyl-L-methionine biosynthesis; S-adenosyl-L-methionine from L-methionine: step 1/1. Catalyzes the formation of S-adenosylmethionine (AdoMet) from methionine and ATP. The overall synthetic reaction is composed of two sequential steps, AdoMet formation and the subsequent tripolyphosphate hydrolysis which occurs prior to release of AdoMet from the enzyme. The sequence is that of S-adenosylmethionine synthase from Methylobacterium nodulans (strain LMG 21967 / CNCM I-2342 / ORS 2060).